Reading from the N-terminus, the 92-residue chain is Large ribosomal subunit protein eL43 (92 aa).

A C4-type zinc finger spans residues 39 to 60 (CDFCGKYGMKRQAVGIWCCKGC).

This sequence belongs to the eukaryotic ribosomal protein eL43 family.

This is Large ribosomal subunit protein eL43 (RPL37a) from Ostreococcus tauri.